The chain runs to 296 residues: Cytidine deaminase (296 aa).

CMP/dCMP-type deaminase domains lie at 48 to 168 and 187 to 296; these read DVDA…FGPV and QNVN…FIEE. 89-91 is a binding site for substrate; that stretch reads NME. H102 serves as a coordination point for Zn(2+). E104 serves as the catalytic Proton donor. 2 residues coordinate Zn(2+): C129 and C132.

It belongs to the cytidine and deoxycytidylate deaminase family. In terms of assembly, homodimer. It depends on Zn(2+) as a cofactor.

It carries out the reaction cytidine + H2O + H(+) = uridine + NH4(+). It catalyses the reaction 2'-deoxycytidine + H2O + H(+) = 2'-deoxyuridine + NH4(+). This enzyme scavenges exogenous and endogenous cytidine and 2'-deoxycytidine for UMP synthesis. This is Cytidine deaminase from Pectobacterium atrosepticum (strain SCRI 1043 / ATCC BAA-672) (Erwinia carotovora subsp. atroseptica).